Here is a 300-residue protein sequence, read N- to C-terminus: Oxidoreductase BOA1 (300 aa).

It belongs to the NmrA-type oxidoreductase family. Isoflavone reductase subfamily.

It functions in the pathway polyketide biosynthesis. Oxidoreductase; part of the gene cluster A that mediates the biosynthesis of botcinic acid and its botcinin derivatives, acetate-derived polyketides that contribute to virulence when combined with the sesquiterpene botrydial. Botcinic acid and its derivatives have been shown to induce chlorosis and necrosis during host plant infection, but also have antifungal activities. Two polyketide synthases, BOA6 and BOA9, are involved in the biosynthesis of botcinins. BOA6 mediates the formation of the per-methylated tetraketide core by condensation of four units of malonyl-CoA with one unit of acetyl-CoA, which would be methylated in activated methylene groups to yield a bicyclic acid intermediate that could then either be converted to botrylactone derivatives or lose the starter acetate unit through a retro-Claisen type C-C bond cleavage to yield botcinin derivatives. The second polyketide synthase, BOA9, is probably required for the biosynthesis of the tetraketide side chain of botcinins. The methyltransferase (MT) domain within BOA6 is probably responsible for the incorporation of four methyl groups. The trans-enoyl reductase BOA5 might take over the enoyl reductase function of BOA6 that misses an ER domain. The monooxygenases BOA2, BOA3 and BOA4 might be involved in further hydroxylations at C4, C5 and C8, whereas BOA7, close to BOA9, could potentially be involved in the hydroxylation at C4 in the side chain of botcinins. This is Oxidoreductase BOA1 from Botryotinia fuckeliana (strain B05.10) (Noble rot fungus).